The primary structure comprises 509 residues: MWIALLGSSLLIGALWLLLRQLNKTYFILSLCKRVRTADGSPLESKVFVVPGKTRFGNNLDLLNLTPANIFSYIRESTAKANGQNYIWNFLFAPEYNIVRAEDAEEIFQSTKITTKNMSYELIRPFLGDGLLISIDQKWHTRRKTLTPAFHFNILQSFLSIFKEESKKFIKILDKNVGFELELNQIIPQFTLNNICETALGVKLDDMSEGNEYRKAIHDFEIVFNQRMCNPLMFFNWYFFLFGDYKKYSRILRTIHGFSSGIIQRKRQQFKQKQLGQVDEFGKKQRYAMLDTLLAAEAEGKIDHQGICDEVNTFMFGGYDTTSTSLIFTLLLLALHADVQERCYEELQDLPEDIDEVSMFQFNELIHLECVIKESLRLFPSAPIIGRTCIEESVMNGLVLPKNAQISIHIYDIMRDARHFPKPNQFLPERFLPENSVNRHPFAFVPFSAGPRNCIGQKFGVLEIKVLLAAVIRNFKLLPATQLEDLTFENGIVLRTQQNIKVKFEARVK.

Cys-454 is a heme binding site.

The protein belongs to the cytochrome P450 family. It depends on heme as a cofactor.

Its subcellular location is the endoplasmic reticulum membrane. It is found in the microsome membrane. Its function is as follows. May be involved in the metabolism of insect hormones and in the breakdown of synthetic insecticides. The polypeptide is Probable cytochrome P450 4ac3 (Cyp4ac3) (Drosophila melanogaster (Fruit fly)).